The sequence spans 268 residues: Magnesium dechelatase SGR1, chloroplastic (268 aa).

The N-terminal 48 residues, 1-48 (MCSLSAIMLLPTKLKPAYSDKRSNSSSSSSLFFNNRRSKKKNQSIVPV), are a transit peptide targeting the chloroplast.

Belongs to the staygreen family. Interacts with HCAR, the chlorophyll catabolic enzymes (CCEs) NYC1, PAO and RCCR, and the LHCII complex. Part of a SGR1-CCE-LHCII complex, which acts in chlorophyll breakdown. Expressed in roots, leaves, seeds, flowers, buds, petals, sepals and siliques.

The protein resides in the plastid. The protein localises to the chloroplast thylakoid membrane. The enzyme catalyses chlorophyll a + 2 H(+) = pheophytin a + Mg(2+). Its function is as follows. Magnesium chelatase involved in chlorophyll a degradation in the chlorophyll-protein complexes of photosystem I (PSI) and photosystem II (PSII). Contributes to the degradation of PSI and PSII in the thylakoid membranes. Required to trigger chlorophyll degradation during natural and dark-induced leaf senescence. Mediates chlorophyll degradation during embryo degreening. Recombinant SGR1 possesses high dechelating activity against chlorophyll a, very low activity against chlorophyllide a, and no activity against chlorophyll b. Magnesium dechelation of chlorophyll a by SGR1 activates chlorophyll b degradation by inducing the expression of NYC1, an enzyme involved in chlorophyll b degradation. The protein is Magnesium dechelatase SGR1, chloroplastic of Arabidopsis thaliana (Mouse-ear cress).